The sequence spans 1003 residues: MGLFFDSPGSNLYLPCFTLVDAPKLVPLPGVSYKVSFERDSIIHVLSEFKRNNSFKNNHLLDKINTAIAQNEIVVDNSVVNSCKQFHKKYGSDNSNNDAEVQMYIVLLPFEAVNNSVGAASRITAIQVEDDTITITFKSVARVENKQPLLNMQHSLWKSSILEIDDRSELRTWDHKSINKSILSFVKIFYDTDKIIKDFKSKYSLASKRSGDIDSRVLYLSPLANTLFMQLNGSHFNKSWKLLKAYLEQLTVLERNYDTCFELVSMMDLVMSILPMSLKQRLDFLTAKKLKSRAILFSTCVQDFQQIFKKLDDSVDYVNNHFSNSSNNDKSKLIANQLRALRFYIDDIKRNNSSVILKANSEKERTDVTSPNKFLKTSSSHDEDSDSNDEMEQIKSFIDSLEEKNVHPDGIKLLQKDFKRFMKMTPQNADYQVLRNYFDIVMDIPFGKTVNISTIDLAKSRAKLNEDHYGLQSVKRRLVEYLSVLKISEISTNDPNLNTDLHPKKDRASINKPPILLLVGPPGVGKTSIAKSVADVLGRKFQRISLGGIHNEAEIRGHRRTYVGSMCGLIIGALRKAGTMNPLILLDEVDKVLSGGVGGFGNRVNGDPGAALLEVLDPEQNSTFSDHYVGFPVDLSQVLFFCTANDLEGISEPLLNRMELIELPGYTPDEKIMIGSKFLLPKQIKANGLDAIKELPKIYLTDEAWNCVVLEYTREPGVRGLERRIGAIVRGKVVEYVENKMIQGEVDKEHLYKYLGLAHHPISEEILAPTEHSEKFGVVNGLSYNSDGSGSVLLFEVIKIHTDESGATNGPYIKTTGNLGNILEESIKIATSFVKHILFRGLIPGVNEKDINEFLTSEYHLHVPMGAVSKDGPSAGAAISLAILSCALKRPVSPKLCMTGEITLRGKILPIGGIKEKLLGAQFYHMNHVLVPSANLSDVVQAVSTDNQEQYEIYMDRSRQPELQKLKDKTQLQLHYCSDFFDVVKYTWPELLNKEVSHSRPSL.

The Lon N-terminal domain occupies 14–305 (LPCFTLVDAP…LFSTCVQDFQ (292 aa)). The segment at 367 to 389 (DVTSPNKFLKTSSSHDEDSDSND) is disordered. Over residues 368–377 (VTSPNKFLKT) the composition is skewed to polar residues. 520–527 (GPPGVGKT) is a binding site for ATP. In terms of domain architecture, Lon proteolytic spans 773–969 (SEKFGVVNGL…QPELQKLKDK (197 aa)). Catalysis depends on residues S874 and K917.

Belongs to the peptidase S16 family.

Its subcellular location is the peroxisome matrix. It catalyses the reaction Hydrolysis of proteins in presence of ATP.. Its function is as follows. ATP-dependent serine protease that mediates the selective degradation of misfolded and unassembled polypeptides in the peroxisomal matrix. Necessary for type 2 peroxisome targeting signal (PTS2)-containing protein processing and facilitates peroxisome matrix protein import. In Kluyveromyces lactis (strain ATCC 8585 / CBS 2359 / DSM 70799 / NBRC 1267 / NRRL Y-1140 / WM37) (Yeast), this protein is Lon protease homolog 2, peroxisomal.